We begin with the raw amino-acid sequence, 311 residues long: tRNA-cytidine(32) 2-sulfurtransferase (311 aa).

The short motif at 47–52 (SGGKDS) is the PP-loop motif element. Cysteine 122, cysteine 125, and cysteine 213 together coordinate [4Fe-4S] cluster.

Belongs to the TtcA family. In terms of assembly, homodimer. Mg(2+) is required as a cofactor. It depends on [4Fe-4S] cluster as a cofactor.

Its subcellular location is the cytoplasm. It catalyses the reaction cytidine(32) in tRNA + S-sulfanyl-L-cysteinyl-[cysteine desulfurase] + AH2 + ATP = 2-thiocytidine(32) in tRNA + L-cysteinyl-[cysteine desulfurase] + A + AMP + diphosphate + H(+). It participates in tRNA modification. Functionally, catalyzes the ATP-dependent 2-thiolation of cytidine in position 32 of tRNA, to form 2-thiocytidine (s(2)C32). The sulfur atoms are provided by the cysteine/cysteine desulfurase (IscS) system. This chain is tRNA-cytidine(32) 2-sulfurtransferase, found in Klebsiella pneumoniae (strain 342).